The chain runs to 122 residues: Large ribosomal subunit protein uL14 (122 aa).

The protein belongs to the universal ribosomal protein uL14 family. In terms of assembly, part of the 50S ribosomal subunit. Forms a cluster with proteins L3 and L19. In the 70S ribosome, L14 and L19 interact and together make contacts with the 16S rRNA in bridges B5 and B8.

Its function is as follows. Binds to 23S rRNA. Forms part of two intersubunit bridges in the 70S ribosome. The polypeptide is Large ribosomal subunit protein uL14 (Francisella philomiragia subsp. philomiragia (strain ATCC 25017 / CCUG 19701 / FSC 153 / O#319-036)).